A 222-amino-acid polypeptide reads, in one-letter code: Arginine ABC transporter permease protein ArtM (222 aa).

The Periplasmic segment spans residues 1-15 (MFEYLPELMKGLHTS). The ABC transmembrane type-1 domain maps to 12-208 (LHTSLTLTVA…VVNGLLTLMM (197 aa)). Residues 16–36 (LTLTVASLIVALILALIFTII) form a helical membrane-spanning segment. The Cytoplasmic portion of the chain corresponds to 37 to 49 (LTLKTPVLVWLVR). Residues 50–70 (GYITLFTGTPLLVQIFLIYYG) traverse the membrane as a helical segment. Topologically, residues 71–79 (PGQFPTLQE) are periplasmic. Residues 80-100 (YPALWHLLSEPWLCALIALSL) form a helical membrane-spanning segment. The Cytoplasmic segment spans residues 101 to 154 (NSAAYTTQLFYGAIRAIPEGQWQSCSALGMSKKDTLAILLPYAFKRSLSSYSNE). A helical membrane pass occupies residues 155 to 175 (VVLVFKSTSLAYTITLMEVMG). Residues 176–186 (YSQLLYGRTYD) lie on the Periplasmic side of the membrane. A helical transmembrane segment spans residues 187 to 207 (VMVFGAAGIIYLVVNGLLTLM). The Cytoplasmic portion of the chain corresponds to 208 to 222 (MRLIERKALAFERRN).

It belongs to the binding-protein-dependent transport system permease family. HisMQ subfamily. The complex is composed of two ATP-binding proteins (ArtP), two transmembrane proteins (ArtM and ArtQ) and two solute-binding proteins (ArtJ and ArtI).

The protein resides in the cell inner membrane. Its function is as follows. Part of the ABC transporter complex ArtPIQMJ involved in arginine transport. Probably responsible for the translocation of the substrate across the membrane. The chain is Arginine ABC transporter permease protein ArtM (artM) from Escherichia coli (strain K12).